Consider the following 64-residue polypeptide: MAHPSQLGFQDAASPVMEELXHFHDHTLMIVFLISTLVXYIIVAMVSTKLTNKYVLDSQEIEIV.

The Mitochondrial intermembrane segment spans residues 1–14 (MAHPSQLGFQDAAS). A helical transmembrane segment spans residues 15–45 (PVMEELXHFHDHTLMIVFLISTLVXYIIVAM). Over 46–64 (VSTKLTNKYVLDSQEIEIV) the chain is Mitochondrial matrix.

Belongs to the cytochrome c oxidase subunit 2 family. In terms of assembly, component of the cytochrome c oxidase (complex IV, CIV), a multisubunit enzyme composed of 14 subunits. The complex is composed of a catalytic core of 3 subunits MT-CO1, MT-CO2 and MT-CO3, encoded in the mitochondrial DNA, and 11 supernumerary subunits COX4I, COX5A, COX5B, COX6A, COX6B, COX6C, COX7A, COX7B, COX7C, COX8 and NDUFA4, which are encoded in the nuclear genome. The complex exists as a monomer or a dimer and forms supercomplexes (SCs) in the inner mitochondrial membrane with NADH-ubiquinone oxidoreductase (complex I, CI) and ubiquinol-cytochrome c oxidoreductase (cytochrome b-c1 complex, complex III, CIII), resulting in different assemblies (supercomplex SCI(1)III(2)IV(1) and megacomplex MCI(2)III(2)IV(2)). Found in a complex with TMEM177, COA6, COX18, COX20, SCO1 and SCO2. Interacts with TMEM177 in a COX20-dependent manner. Interacts with COX20. Interacts with COX16. Requires Cu cation as cofactor.

Its subcellular location is the mitochondrion inner membrane. The catalysed reaction is 4 Fe(II)-[cytochrome c] + O2 + 8 H(+)(in) = 4 Fe(III)-[cytochrome c] + 2 H2O + 4 H(+)(out). In terms of biological role, component of the cytochrome c oxidase, the last enzyme in the mitochondrial electron transport chain which drives oxidative phosphorylation. The respiratory chain contains 3 multisubunit complexes succinate dehydrogenase (complex II, CII), ubiquinol-cytochrome c oxidoreductase (cytochrome b-c1 complex, complex III, CIII) and cytochrome c oxidase (complex IV, CIV), that cooperate to transfer electrons derived from NADH and succinate to molecular oxygen, creating an electrochemical gradient over the inner membrane that drives transmembrane transport and the ATP synthase. Cytochrome c oxidase is the component of the respiratory chain that catalyzes the reduction of oxygen to water. Electrons originating from reduced cytochrome c in the intermembrane space (IMS) are transferred via the dinuclear copper A center (CU(A)) of subunit 2 and heme A of subunit 1 to the active site in subunit 1, a binuclear center (BNC) formed by heme A3 and copper B (CU(B)). The BNC reduces molecular oxygen to 2 water molecules using 4 electrons from cytochrome c in the IMS and 4 protons from the mitochondrial matrix. The sequence is that of Cytochrome c oxidase subunit 2 (mt-co2) from Scaphirhynchus platorynchus (Shovelnose sturgeon).